Reading from the N-terminus, the 116-residue chain is Large ribosomal subunit protein bL20 (116 aa).

This sequence belongs to the bacterial ribosomal protein bL20 family.

Binds directly to 23S ribosomal RNA and is necessary for the in vitro assembly process of the 50S ribosomal subunit. It is not involved in the protein synthesizing functions of that subunit. This is Large ribosomal subunit protein bL20 from Bacteroides thetaiotaomicron (strain ATCC 29148 / DSM 2079 / JCM 5827 / CCUG 10774 / NCTC 10582 / VPI-5482 / E50).